The sequence spans 363 residues: Anhydro-N-acetylmuramic acid kinase (363 aa).

9-16 is an ATP binding site; sequence GTSLDGID.

Belongs to the anhydro-N-acetylmuramic acid kinase family.

It catalyses the reaction 1,6-anhydro-N-acetyl-beta-muramate + ATP + H2O = N-acetyl-D-muramate 6-phosphate + ADP + H(+). It participates in amino-sugar metabolism; 1,6-anhydro-N-acetylmuramate degradation. Its pathway is cell wall biogenesis; peptidoglycan recycling. Its function is as follows. Catalyzes the specific phosphorylation of 1,6-anhydro-N-acetylmuramic acid (anhMurNAc) with the simultaneous cleavage of the 1,6-anhydro ring, generating MurNAc-6-P. Is required for the utilization of anhMurNAc either imported from the medium or derived from its own cell wall murein, and thus plays a role in cell wall recycling. The sequence is that of Anhydro-N-acetylmuramic acid kinase from Nitrosomonas europaea (strain ATCC 19718 / CIP 103999 / KCTC 2705 / NBRC 14298).